The chain runs to 300 residues: MNDTTATRCGYVAIVGRPNVGKSTLLNHILGQKLAITSRKPQTTRHNMLGIKTEGTVQAIYVDTPGMHKNGEKALNRYMNKTASAALKDVDVVIFVVDRTRWTDEDQMVLERVQYVQGPVILAINKTDRIEDKSDLMPHLEWLQGQLPNASIVPISAQHGHNLEALESLIASHLPENDHFFPEDQITDRSSRFLAAELVREKIMRQLGAELPYQITVEIEEFKQQGRTLHIHALILVERDGQKKIIIGDKGDRIKRIGSDARRDMEVLFDSKVMLNLWVKVKGGWSDDERALRSLGYGDL.

Residues 8 to 176 (RCGYVAIVGR…ESLIASHLPE (169 aa)) form the Era-type G domain. Positions 16–23 (GRPNVGKS) are G1. 16–23 (GRPNVGKS) is a GTP binding site. The interval 42 to 46 (QTTRH) is G2. Positions 63-66 (DTPG) are G3. Residues 63–67 (DTPGM) and 125–128 (NKTD) contribute to the GTP site. The tract at residues 125-128 (NKTD) is G4. The tract at residues 155–157 (ISA) is G5. Residues 199 to 283 (VREKIMRQLG…MLNLWVKVKG (85 aa)) form the KH type-2 domain.

This sequence belongs to the TRAFAC class TrmE-Era-EngA-EngB-Septin-like GTPase superfamily. Era GTPase family. Monomer.

Its subcellular location is the cytoplasm. The protein resides in the cell inner membrane. An essential GTPase that binds both GDP and GTP, with rapid nucleotide exchange. Plays a role in 16S rRNA processing and 30S ribosomal subunit biogenesis and possibly also in cell cycle regulation and energy metabolism. The chain is GTPase Era from Pseudomonas syringae pv. tomato (strain ATCC BAA-871 / DC3000).